Consider the following 64-residue polypeptide: SPbeta prophage-derived uncharacterized protein YonP (64 aa).

This is SPbeta prophage-derived uncharacterized protein YonP (yonP) from Bacillus subtilis (strain 168).